Reading from the N-terminus, the 599-residue chain is 1-deoxy-D-xylulose-5-phosphate synthase (599 aa).

Thiamine diphosphate is bound by residues histidine 63 and 104–106; that span reads GHS. Aspartate 135 lines the Mg(2+) pocket. Residues 136 to 137, asparagine 164, tyrosine 271, and glutamate 352 contribute to the thiamine diphosphate site; that span reads GA. A Mg(2+)-binding site is contributed by asparagine 164.

It belongs to the transketolase family. DXPS subfamily. In terms of assembly, homodimer. The cofactor is Mg(2+). Thiamine diphosphate is required as a cofactor.

The enzyme catalyses D-glyceraldehyde 3-phosphate + pyruvate + H(+) = 1-deoxy-D-xylulose 5-phosphate + CO2. Its pathway is metabolic intermediate biosynthesis; 1-deoxy-D-xylulose 5-phosphate biosynthesis; 1-deoxy-D-xylulose 5-phosphate from D-glyceraldehyde 3-phosphate and pyruvate: step 1/1. Catalyzes the acyloin condensation reaction between C atoms 2 and 3 of pyruvate and glyceraldehyde 3-phosphate to yield 1-deoxy-D-xylulose-5-phosphate (DXP). This chain is 1-deoxy-D-xylulose-5-phosphate synthase, found in Nitratiruptor sp. (strain SB155-2).